The chain runs to 502 residues: AMP phosphorylase (502 aa).

AMP contacts are provided by residues glycine 168, 195 to 200 (SRAITS), and threonine 204. Aspartate 257 functions as the Proton donor in the catalytic mechanism. Serine 265 and lysine 289 together coordinate AMP.

The protein belongs to the thymidine/pyrimidine-nucleoside phosphorylase family. Type 2 subfamily.

It carries out the reaction AMP + phosphate = alpha-D-ribose 1,5-bisphosphate + adenine. It catalyses the reaction CMP + phosphate = cytosine + alpha-D-ribose 1,5-bisphosphate. The catalysed reaction is UMP + phosphate = alpha-D-ribose 1,5-bisphosphate + uracil. In terms of biological role, catalyzes the conversion of AMP and phosphate to adenine and ribose 1,5-bisphosphate (R15P). Exhibits phosphorylase activity toward CMP and UMP in addition to AMP. Functions in an archaeal AMP degradation pathway, together with R15P isomerase and RubisCO. The polypeptide is AMP phosphorylase (Hyperthermus butylicus (strain DSM 5456 / JCM 9403 / PLM1-5)).